We begin with the raw amino-acid sequence, 152 residues long: Cell division protein SepF (152 aa).

Belongs to the SepF family. In terms of assembly, homodimer. Interacts with FtsZ.

Its subcellular location is the cytoplasm. In terms of biological role, cell division protein that is part of the divisome complex and is recruited early to the Z-ring. Probably stimulates Z-ring formation, perhaps through the cross-linking of FtsZ protofilaments. Its function overlaps with FtsA. The protein is Cell division protein SepF of Clostridioides difficile (strain 630) (Peptoclostridium difficile).